A 105-amino-acid polypeptide reads, in one-letter code: Cell division protein FtsB (105 aa).

Topologically, residues 1–3 are cytoplasmic; it reads MKP. Residues 4-21 traverse the membrane as a helical segment; sequence FVLVLFALLALLQYRLWF. The Periplasmic portion of the chain corresponds to 22–105; the sequence is GENSLTEYFT…RSSEQSQDNQ (84 aa). The stretch at 38–75 forms a coiled coil; it reads HQQSGNAELLERNEVLKEEIQDLKSGTEALEERARNEL.

The protein belongs to the FtsB family. Part of a complex composed of FtsB, FtsL and FtsQ.

Its subcellular location is the cell inner membrane. Essential cell division protein. May link together the upstream cell division proteins, which are predominantly cytoplasmic, with the downstream cell division proteins, which are predominantly periplasmic. This Shewanella amazonensis (strain ATCC BAA-1098 / SB2B) protein is Cell division protein FtsB.